Here is a 276-residue protein sequence, read N- to C-terminus: MKKITPKAMCAWIPKREDETHKGDYGRVLIVAGNKQFGGAAIMAAEACVKSGAGLTTVASDSVNRPALQTRIPECMFIDYENITSLSEQISQFDTILIGPGLGLDAYAEEIFRLVLQKSTEHQQVIIDGDGITIYAKGENPHPAAKLTFTPHAGEWERLKVLAPDAVTPTDVALAIDATIVLKGHRTKVYSGESAWQNMYGTPAMATGGMGDTLAGTICGLMAQTEKPITGTLAAVFLHSYIGEILAKKRYVVLPTEIAEELPTYLKIFSETDEHA.

The YjeF C-terminal domain maps to 5 to 269 (TPKAMCAWIP…EELPTYLKIF (265 aa)). (6S)-NADPHX contacts are provided by A40, G103, and H152. Residue G211 coordinates AMP. Position 212 (D212) interacts with (6S)-NADPHX.

It belongs to the NnrD/CARKD family. Homotetramer. Mg(2+) serves as cofactor.

It carries out the reaction (6S)-NADHX + ADP = AMP + phosphate + NADH + H(+). The enzyme catalyses (6S)-NADPHX + ADP = AMP + phosphate + NADPH + H(+). In terms of biological role, catalyzes the dehydration of the S-form of NAD(P)HX at the expense of ADP, which is converted to AMP. Together with NAD(P)HX epimerase, which catalyzes the epimerization of the S- and R-forms, the enzyme allows the repair of both epimers of NAD(P)HX, a damaged form of NAD(P)H that is a result of enzymatic or heat-dependent hydration. The chain is ADP-dependent (S)-NAD(P)H-hydrate dehydratase from Listeria monocytogenes serovar 1/2a (strain ATCC BAA-679 / EGD-e).